The primary structure comprises 661 residues: MKFTRTLVLASTFLLATVATSQAQEVKRDTKKRGEVVLKPITIISHGKDNIEATGGTVLTYKDIEKLQPANVSELFSRQSSIAVSGGGGPSKRIHILGMEQSNLAVSVDGVPQTATSWHHTGSNVIDPAFLKRVEVEAGAAAADSGFGAAAGAIRYETVNALDLLEPGKTFGARIIGSYGTNGRGFSGSTAAYGLKDGFDWLLMLHGTSGHNYKNGDGTEILGTEPAARNILGKAGYEFDGNRIDIGYERSRDKADRLIKMNMGLPGDTEYPLEVARDSVNIKYTRTDATDMWDPEVQFYYNRNDYWRNDYQNRTNGNMILKEDLYGGKLQNTFTIDYGKITAGIDFGKHDYNTDNYGHNDRRYRKFNTQQVGAFTQGRFEFDNGFSLSTGARYDYSRFADWNDEVFSDSGASVNGTLSYKFNEHIEVFAGASRTWLGYVLGDYGYVHARNNAFYTDPTFSPGRARNYKAGVNFGGADWSAGITLFDTRIAGLPNYDSQKLGNDPEEYRSRGFTLNARYIWNYTTIGATFTKAKVTAGDDPVLPNSGSFMPIGDMATLFIDQEIPDYNMKVGATLAWAGRISDEAATAANFYDQPAYTVVNAYAEWNPPAVKNMTLRVGVENLFNENYYERTSFAPSQKRGGIDPVWAPGRTFTFQTAFKF.

An N-terminal signal peptide occupies residues 1–23 (MKFTRTLVLASTFLLATVATSQA). A TBDR plug domain is found at 48–159 (KDNIEATGGT…AAGAIRYETV (112 aa)). The 492-residue stretch at 170-661 (TFGARIIGSY…TFTFQTAFKF (492 aa)) folds into the TBDR beta-barrel domain.

Belongs to the TonB-dependent receptor family.

The protein localises to the cell outer membrane. Functionally, heme transporter. This chain is Heme transporter BhuA (bhuA), found in Brucella suis biovar 1 (strain 1330).